The sequence spans 422 residues: SPbeta prophage-derived glycosyltransferase SunS (422 aa).

It belongs to the glycosyltransferase 2 family.

Transfers a hexose moiety onto 'Cys-41' of bacteriocin sublancin-168 (SunA). Accepts UDP-glucose (UDP-Glc), UDP-N-acetylglucosamine (UDP-GlcNAc), UDP-galactose (UDP-Gal), UDP-xylose (UDP-Xyl) and GDP-mannose as substrate. The sequence is that of SPbeta prophage-derived glycosyltransferase SunS (sunS) from Bacillus subtilis (strain 168).